The sequence spans 265 residues: MTNWTEIDEIAKKWIREAGARITQSMHESLTIETKSNPNDLVTNIDKETEKFFIDRIQETFPGHRILGEEGQGDKIHSLEGVVWIIDPIDGTMNFVHQQRNFAISIGIFENGEGKIGLIYDVVHDELYHAFSGRGAYMNETKLAPLKETVIEEAILAINATWVTENRRIDQSVLAPLVKRVRGTRSYGSAALELANVAAGRIDAYITMRLAPWDYAAGCVLLNEVGGTYTTIEGEPFTFLENHSVLAGNPSIHKTIFEEYLHARK.

Glu-69, Asp-87, Ile-89, and Asp-90 together coordinate Mg(2+). A substrate-binding site is contributed by Glu-69. Substrate-binding positions include 89-92 (IDGT), Arg-185, and Asp-214. Mg(2+) is bound at residue Asp-214.

This sequence belongs to the inositol monophosphatase superfamily. The cofactor is Mg(2+).

The catalysed reaction is a myo-inositol phosphate + H2O = myo-inositol + phosphate. It catalyses the reaction a ribonucleoside 5'-phosphate + H2O = a ribonucleoside + phosphate. Hydrolyzes myo-inositol monophosphate. Catalyzes the dephosphorylation of GMP and IMP. In Bacillus subtilis (strain 168), this protein is Inositol-1-monophosphatase.